The sequence spans 477 residues: Proline--tRNA ligase (477 aa).

It belongs to the class-II aminoacyl-tRNA synthetase family. ProS type 3 subfamily. In terms of assembly, homodimer.

Its subcellular location is the cytoplasm. It catalyses the reaction tRNA(Pro) + L-proline + ATP = L-prolyl-tRNA(Pro) + AMP + diphosphate. In terms of biological role, catalyzes the attachment of proline to tRNA(Pro) in a two-step reaction: proline is first activated by ATP to form Pro-AMP and then transferred to the acceptor end of tRNA(Pro). This is Proline--tRNA ligase from Methanoculleus marisnigri (strain ATCC 35101 / DSM 1498 / JR1).